A 497-amino-acid chain; its full sequence is Probable malate:quinone oxidoreductase (497 aa).

This sequence belongs to the MQO family. It depends on FAD as a cofactor.

The catalysed reaction is (S)-malate + a quinone = a quinol + oxaloacetate. Its pathway is carbohydrate metabolism; tricarboxylic acid cycle; oxaloacetate from (S)-malate (quinone route): step 1/1. The polypeptide is Probable malate:quinone oxidoreductase (Bacillus cereus (strain ATCC 14579 / DSM 31 / CCUG 7414 / JCM 2152 / NBRC 15305 / NCIMB 9373 / NCTC 2599 / NRRL B-3711)).